Reading from the N-terminus, the 706-residue chain is Lysophospholipase 2 (706 aa).

The signal sequence occupies residues 1–19; the sequence is MQLRNILQASSLISGLSLA. The region spanning 36–588 is the PLA2c domain; sequence PCPSDDTSLV…ADYCWNGTLS (553 aa). N-linked (GlcNAc...) asparagine glycosylation is found at asparagine 47, asparagine 80, asparagine 94, asparagine 125, asparagine 162, asparagine 181, asparagine 193, asparagine 217, asparagine 279, asparagine 309, asparagine 365, asparagine 390, asparagine 491, asparagine 515, asparagine 524, asparagine 543, asparagine 567, asparagine 584, asparagine 598, asparagine 630, asparagine 634, asparagine 642, asparagine 648, asparagine 652, and asparagine 658. Positions 627-672 are disordered; that stretch reads TSGNTTSNSTTSTSSNVTSNSNSSSNTTLNSNSSSSSISSSTARSS. Asparagine 680 carries GPI-anchor amidated asparagine lipidation. Residues 681-706 constitute a propeptide, removed in mature form; that stretch reads AAAISYANTNTLMSLLGAITALFGLI.

It belongs to the lysophospholipase family. Post-translationally, the GPI-anchor is attached to the protein in the endoplasmic reticulum and serves to target the protein to the cell surface. There, the glucosamine-inositol phospholipid moiety is cleaved off and the GPI-modified mannoprotein is covalently attached via its lipidless GPI glycan remnant to the 1,6-beta-glucan of the outer cell wall layer.

It is found in the secreted. The protein localises to the cell wall. The protein resides in the membrane. It carries out the reaction a 1-acyl-sn-glycero-3-phosphocholine + H2O = sn-glycerol 3-phosphocholine + a fatty acid + H(+). It catalyses the reaction 1-hexadecanoyl-sn-glycero-3-phosphoethanolamine + H2O = sn-glycero-3-phosphoethanolamine + hexadecanoate + H(+). The catalysed reaction is 1-hexadecanoyl-sn-glycero-3-phosphocholine + H2O = sn-glycerol 3-phosphocholine + hexadecanoate + H(+). The enzyme catalyses 1-hexadecanoyl-sn-glycero-3-phospho-L-serine + H2O = sn-glycero-3-phospho-L-serine + hexadecanoate + H(+). It carries out the reaction 1,2-dihexadecanoyl-sn-glycero-3-phosphocholine + H2O = 1-hexadecanoyl-sn-glycero-3-phosphocholine + hexadecanoate + H(+). Functionally, sequentially removes both fatty acyl groups from diacylglycerophospholipids and therefore has both phospholipase A and lysophospholipase activities. However, it does not display transacylase activity. Substrate preference is phosphatidylserine &gt; phosphatidylinositol &gt; phosphatidylcholine &gt; phosphatidylethanolamine. The substrate specificity is pH- and ion-dependent. In contrast with activities observed at optimum pH 3.5, the order of substrate preference at pH 5.5 is phosphatidylserine = phosphatidylethanolamine &gt; phosphatidylcholine &gt; phosphatidylinositol. This is Lysophospholipase 2 (PLB2) from Saccharomyces cerevisiae (strain ATCC 204508 / S288c) (Baker's yeast).